The sequence spans 266 residues: Ribosomal RNA small subunit methyltransferase A (266 aa).

The S-adenosyl-L-methionine site is built by Asn-11, Leu-13, Gly-37, Glu-57, Asp-85, and Asn-104.

It belongs to the class I-like SAM-binding methyltransferase superfamily. rRNA adenine N(6)-methyltransferase family. RsmA subfamily.

It localises to the cytoplasm. The enzyme catalyses adenosine(1518)/adenosine(1519) in 16S rRNA + 4 S-adenosyl-L-methionine = N(6)-dimethyladenosine(1518)/N(6)-dimethyladenosine(1519) in 16S rRNA + 4 S-adenosyl-L-homocysteine + 4 H(+). In terms of biological role, specifically dimethylates two adjacent adenosines (A1518 and A1519) in the loop of a conserved hairpin near the 3'-end of 16S rRNA in the 30S particle. May play a critical role in biogenesis of 30S subunits. The sequence is that of Ribosomal RNA small subunit methyltransferase A from Campylobacter jejuni subsp. jejuni serotype O:2 (strain ATCC 700819 / NCTC 11168).